A 618-amino-acid polypeptide reads, in one-letter code: Syncytin-B (618 aa).

The first 17 residues, 1–17 (MTGFWVLCFVLFPSSLS), serve as a signal peptide directing secretion. The Extracellular portion of the chain corresponds to 18-545 (YPESWMPLVN…SWGQWPDLGR (528 aa)). A glycan (N-linked (GlcNAc...) asparagine) is linked at N27. The CXXC motif lies at 44–47 (CWVC). 3 disulfides stabilise this stretch: C44–C47, C44–C507, and C499–C506. N184, N274, and N357 each carry an N-linked (GlcNAc...) asparagine glycan. The fusion peptide stretch occupies residues 422 to 442 (LFPFLAGLGISSALGTGIAGL). The tract at residues 482–498 (LQNRRALDLITAEKGGT) is immunosuppression. Residues 499–507 (CLFLQEECC) carry the CX6CC motif. The chain crosses the membrane as a helical span at residues 546-566 (WLPWLTPFLGPLLFLFFLLTF). The Cytoplasmic portion of the chain corresponds to 567–618 (GSCLLNCLTRFVSQRLGSFVQDTAKRHVDSILQNFQYKKLPQDSPDEDTIPT).

It belongs to the gamma type-C retroviral envelope protein family. The mature protein consists of a trimer of SU-TM heterodimers. The SU-TM heterodimers are attached by a labile interchain disulfide bond. In terms of processing, synthesized as an inactive precursor that is heavily N-glycosylated and processed likely by furin in the Golgi to yield the mature SU and TM proteins. The cleavage site between SU and TM requires the minimal sequence [KR]-X-[KR]-R. The CXXC motif is highly conserved across a broad range of retroviral envelope proteins. It is thought to participate in the formation of a labile disulfide bond possibly with the CX6CC motif present in the transmembrane protein. Isomerization of the intersubunit disulfide bond to an SU intrachain disulfide bond is thought to occur upon receptor recognition in order to allow membrane fusion. In terms of tissue distribution, highly expressed in placenta where it localizes to syncytiotrophoblasts of the labyrinthine zona. Specifically localizes to syncytiotrophoblast layer II (SynT-II). Also detected at very low levels in ovary.

Its subcellular location is the cell membrane. Functionally, this endogenous retroviral envelope protein has retained its original fusogenic properties. Together with Syna, participates in trophoblast fusion and the formation of a syncytium during placenta morphogenesis. Synb is specifically involved in formation of syncytiotrophoblast layer II (SynT-II). Promotes myoblast fusion, and may play a role in regeneration of damaged muscle tissue in males. May have immunosuppressive activity. The polypeptide is Syncytin-B (Mus musculus (Mouse)).